The primary structure comprises 514 residues: Beta-glucosidase 21 (514 aa).

Residues M1 to S25 form the signal peptide. Residues Q47 and H147 each coordinate a beta-D-glucoside. E193 functions as the Proton donor in the catalytic mechanism. A disulfide bridge connects residues C212 and C220. 2 N-linked (GlcNAc...) asparagine glycosylation sites follow: N219 and N224. A beta-D-glucoside-binding residues include Y336 and E406. Catalysis depends on E406, which acts as the Nucleophile. A glycan (N-linked (GlcNAc...) asparagine) is linked at N407. A beta-D-glucoside-binding residues include W448 and F465. An N-linked (GlcNAc...) asparagine glycan is attached at N494.

The protein belongs to the glycosyl hydrolase 1 family.

It catalyses the reaction Hydrolysis of terminal, non-reducing beta-D-glucosyl residues with release of beta-D-glucose.. The sequence is that of Beta-glucosidase 21 (BGLU21) from Oryza sativa subsp. japonica (Rice).